A 109-amino-acid polypeptide reads, in one-letter code: Ribulose bisphosphate carboxylase small subunit (109 aa).

The protein belongs to the RuBisCO small chain family. Heterohexadecamer of 8 large and 8 small subunits.

The protein localises to the carboxysome. RuBisCO catalyzes two reactions: the carboxylation of D-ribulose 1,5-bisphosphate, the primary event in carbon dioxide fixation, as well as the oxidative fragmentation of the pentose substrate in the photorespiration process. Both reactions occur simultaneously and in competition at the same active site. Although the small subunit is not catalytic it is essential for maximal activity. The polypeptide is Ribulose bisphosphate carboxylase small subunit (Prochlorothrix hollandica).